The chain runs to 103 residues: GP16 protein (103 aa).

The protein is GP16 protein (GP16) of Orgyia pseudotsugata multicapsid polyhedrosis virus (OpMNPV).